Consider the following 189-residue polypeptide: Calcyphosin (189 aa).

EF-hand domains follow at residues 21 to 56 (LGIQ…LGLV), 57 to 92 (LDTA…PMSQ), 93 to 128 (AREA…RTHP), and 136 to 172 (TEEE…VSAS). Residues D34, D36, S38, S40, E45, D70, D72, S74, T76, E81, D106, S108, D110, and D117 each coordinate Ca(2+). Residue S40 is modified to Phosphoserine; by PKA.

As to quaternary structure, monomer. Does not form oligomers in the presence of calcium. In terms of processing, phosphorylated in response to thyrotropin and cAMP. As to expression, detected in thyroid, salivary gland, lung, brain and cerebellum (at protein level).

The protein resides in the cytoplasm. In terms of biological role, calcium-binding protein. May play a role in cellular signaling events (Potential). In Canis lupus familiaris (Dog), this protein is Calcyphosin (CAPS).